Here is a 310-residue protein sequence, read N- to C-terminus: Peroxidase 44 (310 aa).

The signal sequence occupies residues 1–20; sequence MRSITALFFLFCFLAPSALA. 4 cysteine pairs are disulfide-bonded: Cys-31–Cys-110, Cys-64–Cys-69, Cys-116–Cys-305, and Cys-194–Cys-218. His-62 serves as the catalytic Proton acceptor. The Ca(2+) site is built by Asp-63, Val-66, Gly-68, Asp-70, and Ser-72. Pro-156 serves as a coordination point for substrate. His-187 serves as a coordination point for heme b. Ser-188 serves as a coordination point for Ca(2+). Positions 229, 232, and 237 each coordinate Ca(2+).

It belongs to the peroxidase family. Classical plant (class III) peroxidase subfamily. Heme b is required as a cofactor. It depends on Ca(2+) as a cofactor.

Its subcellular location is the secreted. It carries out the reaction 2 a phenolic donor + H2O2 = 2 a phenolic radical donor + 2 H2O. Its function is as follows. Removal of H(2)O(2), oxidation of toxic reductants, biosynthesis and degradation of lignin, suberization, auxin catabolism, response to environmental stresses such as wounding, pathogen attack and oxidative stress. These functions might be dependent on each isozyme/isoform in each plant tissue. The protein is Peroxidase 44 (PER44) of Arabidopsis thaliana (Mouse-ear cress).